The chain runs to 83 residues: Cytochrome b559 subunit alpha (83 aa).

A helical membrane pass occupies residues 21–35 (IIHSITIPSLFIAGW). His-23 contributes to the heme binding site.

Heterodimer of an alpha subunit and a beta subunit. PSII is composed of 1 copy each of membrane proteins PsbA, PsbB, PsbC, PsbD, PsbE, PsbF, PsbH, PsbI, PsbJ, PsbK, PsbL, PsbM, PsbT, PsbX, PsbY, PsbZ, Psb30/Ycf12, at least 3 peripheral proteins of the oxygen-evolving complex and a large number of cofactors. It forms dimeric complexes. Heme b is required as a cofactor.

The protein localises to the plastid. The protein resides in the chloroplast thylakoid membrane. In terms of biological role, this b-type cytochrome is tightly associated with the reaction center of photosystem II (PSII). PSII is a light-driven water:plastoquinone oxidoreductase that uses light energy to abstract electrons from H(2)O, generating O(2) and a proton gradient subsequently used for ATP formation. It consists of a core antenna complex that captures photons, and an electron transfer chain that converts photonic excitation into a charge separation. The sequence is that of Cytochrome b559 subunit alpha from Pisum sativum (Garden pea).